A 31-amino-acid chain; its full sequence is Cytochrome b6-f complex subunit 6 (31 aa).

A helical transmembrane segment spans residues 4–24; the sequence is LISYISLLAGFVIIASVFYLA.

Belongs to the PetL family. As to quaternary structure, the 4 large subunits of the cytochrome b6-f complex are cytochrome b6, subunit IV (17 kDa polypeptide, PetD), cytochrome f and the Rieske protein, while the 4 small subunits are PetG, PetL, PetM and PetN. The complex functions as a dimer.

It is found in the plastid. Its subcellular location is the chloroplast thylakoid membrane. Its function is as follows. Component of the cytochrome b6-f complex, which mediates electron transfer between photosystem II (PSII) and photosystem I (PSI), cyclic electron flow around PSI, and state transitions. PetL is important for photoautotrophic growth as well as for electron transfer efficiency and stability of the cytochrome b6-f complex. This Tupiella akineta (Green alga) protein is Cytochrome b6-f complex subunit 6.